Reading from the N-terminus, the 489-residue chain is Dihydropyrimidinase 1 (489 aa).

Zn(2+) contacts are provided by His61, His63, and Lys156. The residue at position 156 (Lys156) is an N6-carboxylysine. Tyr161 provides a ligand contact to substrate. Zn(2+)-binding residues include His189 and His245. Ser295 lines the substrate pocket. A Zn(2+)-binding site is contributed by Asp323. Asn344 serves as a coordination point for substrate.

It belongs to the metallo-dependent hydrolases superfamily. Hydantoinase/dihydropyrimidinase family. Homotetramer. The cofactor is Zn(2+). Post-translationally, carboxylation allows a single lysine to coordinate two zinc ions.

It is found in the nucleus. It carries out the reaction 5,6-dihydrouracil + H2O = 3-(carbamoylamino)propanoate + H(+). In Caenorhabditis briggsae, this protein is Dihydropyrimidinase 1 (dhp-1).